A 536-amino-acid polypeptide reads, in one-letter code: Membrane protein insertase YidC (536 aa).

Helical transmembrane passes span 7–27 (LLVMGLLLVSFLIFTQWQQDF), 332–352 (FWLLIFIHSIIGNWGLAIMGV), 411–431 (MGGCLPLILQMPIFIALYWTF), 449–469 (LSAQDPYYIFPVLMGLSMFLL), and 488–508 (FMPVIFTVFFLWFPSGLVLYW).

This sequence belongs to the OXA1/ALB3/YidC family. Type 1 subfamily. Interacts with the Sec translocase complex via SecD. Specifically interacts with transmembrane segments of nascent integral membrane proteins during membrane integration.

The protein resides in the cell inner membrane. Its function is as follows. Required for the insertion and/or proper folding and/or complex formation of integral membrane proteins into the membrane. Involved in integration of membrane proteins that insert both dependently and independently of the Sec translocase complex, as well as at least some lipoproteins. Aids folding of multispanning membrane proteins. The protein is Membrane protein insertase YidC of Haemophilus ducreyi (strain 35000HP / ATCC 700724).